Reading from the N-terminus, the 192-residue chain is MLKFDNLILASSSKQRLSLLEQIGVVPGEIISPDIDEVILKKELPKAYSIRIAQAKCEKVKLLHPDKFVLSADTVVCCGRRILPKVETEEQALECIRLISGRRHRVYTTVCLYTPHGKLHCRNVVTVVKFKNLSVQEIDAYIDSRQWYGKSGACSIQTNAGKFVLSINGSYSSIIGLPLYETYSILNRYFSI.

D73 functions as the Proton acceptor in the catalytic mechanism.

Belongs to the Maf family. A divalent metal cation is required as a cofactor.

Its subcellular location is the cytoplasm. The enzyme catalyses a ribonucleoside 5'-triphosphate + H2O = a ribonucleoside 5'-phosphate + diphosphate + H(+). It carries out the reaction a 2'-deoxyribonucleoside 5'-triphosphate + H2O = a 2'-deoxyribonucleoside 5'-phosphate + diphosphate + H(+). In terms of biological role, nucleoside triphosphate pyrophosphatase. May have a dual role in cell division arrest and in preventing the incorporation of modified nucleotides into cellular nucleic acids. This Ehrlichia canis (strain Jake) protein is Nucleoside triphosphate pyrophosphatase.